A 339-amino-acid polypeptide reads, in one-letter code: Phosphate acyltransferase (339 aa).

Belongs to the PlsX family. Homodimer. Probably interacts with PlsY.

Its subcellular location is the cytoplasm. It carries out the reaction a fatty acyl-[ACP] + phosphate = an acyl phosphate + holo-[ACP]. Its pathway is lipid metabolism; phospholipid metabolism. Catalyzes the reversible formation of acyl-phosphate (acyl-PO(4)) from acyl-[acyl-carrier-protein] (acyl-ACP). This enzyme utilizes acyl-ACP as fatty acyl donor, but not acyl-CoA. This is Phosphate acyltransferase from Helicobacter pylori (strain J99 / ATCC 700824) (Campylobacter pylori J99).